Consider the following 72-residue polypeptide: C-hordein (72 aa).

Residues Phe-1–Gln-36 show a composition bias toward pro residues. The tract at residues Phe-1 to Gln-61 is disordered. Residues Gln-37 to Gln-50 are compositionally biased toward low complexity.

In terms of tissue distribution, developing endosperm.

Functionally, sulfur-poor seed storage protein. This is C-hordein from Hordeum vulgare (Barley).